The primary structure comprises 103 residues: U6 snRNA-associated Sm-like protein LSm7 (103 aa).

At Ala2 the chain carries N-acetylalanine. One can recognise a Sm domain in the interval 10–90; it reads ESILDLSKYI…VVLICPQDGM (81 aa).

It belongs to the snRNP Sm proteins family. In terms of assembly, component of the precatalytic spliceosome (spliceosome B complex). Component of the U4/U6-U5 tri-snRNP complex, a building block of the precatalytic spliceosome (spliceosome B complex). The U4/U6-U5 tri-snRNP complex is composed of the U4, U6 and U5 snRNAs and at least PRPF3, PRPF4, PRPF6, PRPF8, PRPF31, SNRNP200, TXNL4A, SNRNP40, SNRPB, SNRPD1, SNRPD2, SNRPD3, SNRPE, SNRPF, SNRPG, DDX23, CD2BP2, PPIH, SNU13, EFTUD2, SART1 and USP39, plus LSM2, LSM3, LSM4, LSM5, LSM6, LSM7 and LSM8. LSM2, LSM3, LSM4, LSM5, LSM6, LSM7 and LSM8 form a heptameric, ring-shaped subcomplex (the LSM2-8 complex) that is part of the U4/U6-U5 tri-snRNP complex and the precatalytic spliceosome. Interacts with TACC1.

It localises to the nucleus. In terms of biological role, plays a role in pre-mRNA splicing as component of the U4/U6-U5 tri-snRNP complex that is involved in spliceosome assembly, and as component of the precatalytic spliceosome (spliceosome B complex). The heptameric LSM2-8 complex binds specifically to the 3'-terminal U-tract of U6 snRNA. This Homo sapiens (Human) protein is U6 snRNA-associated Sm-like protein LSm7 (LSM7).